Consider the following 214-residue polypeptide: Probable chemoreceptor glutamine deamidase CheD (214 aa).

This sequence belongs to the CheD family.

The catalysed reaction is L-glutaminyl-[protein] + H2O = L-glutamyl-[protein] + NH4(+). Probably deamidates glutamine residues to glutamate on methyl-accepting chemotaxis receptors (MCPs), playing an important role in chemotaxis. In Vibrio vulnificus (strain CMCP6), this protein is Probable chemoreceptor glutamine deamidase CheD.